Here is a 334-residue protein sequence, read N- to C-terminus: Phosphate acyltransferase (334 aa).

The protein belongs to the PlsX family. Homodimer. Probably interacts with PlsY.

The protein resides in the cytoplasm. The enzyme catalyses a fatty acyl-[ACP] + phosphate = an acyl phosphate + holo-[ACP]. It functions in the pathway lipid metabolism; phospholipid metabolism. In terms of biological role, catalyzes the reversible formation of acyl-phosphate (acyl-PO(4)) from acyl-[acyl-carrier-protein] (acyl-ACP). This enzyme utilizes acyl-ACP as fatty acyl donor, but not acyl-CoA. The chain is Phosphate acyltransferase from Caldicellulosiruptor saccharolyticus (strain ATCC 43494 / DSM 8903 / Tp8T 6331).